Here is a 549-residue protein sequence, read N- to C-terminus: TBC1 domain family member 3 (549 aa).

The 193-residue stretch at 101 to 293 (GMPMNIRGPM…RLWDVYLVEG (193 aa)) folds into the Rab-GAP TBC domain. Residues cysteine 318 and cysteine 325 are each lipidated (S-palmitoyl cysteine). The disordered stretch occupies residues 350 to 419 (LTRKKGDLPP…PRSSTPCPGG (70 aa)). The segment covering 398-417 (PRPIWSASPPRAPRSSTPCP) has biased composition (low complexity).

In terms of processing, ubiquitinated by a CUL7-based E3 ligase, which leads to proteasomal degradation. Palmitoylation is required for membrane localization and protects TBC1D3 from ubiquitination. In terms of tissue distribution, expressed in liver, skeletal muscle, kidney, pancreas, spleen, testis, ovary, small intestine and peripheral blood leukocytes. Overexpressed in prostate cancers.

It localises to the cell membrane. In terms of biological role, acts as a GTPase activating protein for RAB5. Does not act on RAB4 or RAB11. This is TBC1 domain family member 3 (TBC1D3) from Homo sapiens (Human).